The chain runs to 396 residues: Elongation factor Tu (396 aa).

One can recognise a tr-type G domain in the interval 10–206; the sequence is KPHVNVGTIG…ALDTYIPTPE (197 aa). The tract at residues 19-26 is G1; it reads GHVDHGKT. 19–26 is a binding site for GTP; the sequence is GHVDHGKT. Thr-26 contacts Mg(2+). The segment at 60–64 is G2; the sequence is GITIN. Residues 81-84 are G3; sequence DCPG. GTP-binding positions include 81–85 and 136–139; these read DCPGH and NKCD. The interval 136–139 is G4; sequence NKCD. Positions 174 to 176 are G5; sequence SAK.

It belongs to the TRAFAC class translation factor GTPase superfamily. Classic translation factor GTPase family. EF-Tu/EF-1A subfamily. In terms of assembly, monomer.

Its subcellular location is the cytoplasm. It catalyses the reaction GTP + H2O = GDP + phosphate + H(+). Functionally, GTP hydrolase that promotes the GTP-dependent binding of aminoacyl-tRNA to the A-site of ribosomes during protein biosynthesis. The sequence is that of Elongation factor Tu from Cupriavidus necator (strain ATCC 17699 / DSM 428 / KCTC 22496 / NCIMB 10442 / H16 / Stanier 337) (Ralstonia eutropha).